A 67-amino-acid polypeptide reads, in one-letter code: Mitotic-spindle organizing protein 1A (67 aa).

Belongs to the MOZART1 family. In terms of assembly, part of the gamma-tubulin complex. Interacts with GIP1 and GCP3. As to expression, mostly expressed in siliques and flowers, and, to a lower extent, in leaves, roots and seedlings, with highest levels in young tissues, meristematic cells, and the vasculature.

The protein localises to the cytoplasm. It is found in the cytoskeleton. Its subcellular location is the microtubule organizing center. It localises to the spindle. The protein resides in the nucleus. The protein localises to the phragmoplast. It is found in the nucleus envelope. Its function is as follows. Required for gamma-tubulin complex recruitment to the microtubule organizing centers (MTOCs). During mitosis, modulates gamma-tubulin complex localization, spindle stability and chromosomal segregation. Necessary for gametophyte development and embryogenesis. The polypeptide is Mitotic-spindle organizing protein 1A (GIP2) (Arabidopsis thaliana (Mouse-ear cress)).